The primary structure comprises 61 residues: Small ribosomal subunit protein uS14 (61 aa).

Residues C24, C27, C40, and C43 each coordinate Zn(2+).

It belongs to the universal ribosomal protein uS14 family. Zinc-binding uS14 subfamily. Part of the 30S ribosomal subunit. Contacts proteins S3 and S10. Requires Zn(2+) as cofactor.

In terms of biological role, binds 16S rRNA, required for the assembly of 30S particles and may also be responsible for determining the conformation of the 16S rRNA at the A site. The sequence is that of Small ribosomal subunit protein uS14 from Mycoplasmoides gallisepticum (strain R(low / passage 15 / clone 2)) (Mycoplasma gallisepticum).